A 388-amino-acid polypeptide reads, in one-letter code: ATP phosphoribosyltransferase regulatory subunit (388 aa).

It belongs to the class-II aminoacyl-tRNA synthetase family. HisZ subfamily. As to quaternary structure, heteromultimer composed of HisG and HisZ subunits.

Its subcellular location is the cytoplasm. It functions in the pathway amino-acid biosynthesis; L-histidine biosynthesis; L-histidine from 5-phospho-alpha-D-ribose 1-diphosphate: step 1/9. Functionally, required for the first step of histidine biosynthesis. May allow the feedback regulation of ATP phosphoribosyltransferase activity by histidine. This chain is ATP phosphoribosyltransferase regulatory subunit, found in Acinetobacter baumannii (strain SDF).